Reading from the N-terminus, the 368-residue chain is N-acetylneuraminate epimerase (368 aa).

The N-terminal stretch at 1-19 (MNKTIMALAIMMASFAANA) is a signal peptide. Kelch repeat units lie at residues 40 to 84 (TVYI…AFID), 86 to 137 (NLYV…FVHN), 139 to 173 (KAYVTGGVNQNIFNGYFEDLNEAGKDSTAIDKINA), 174 to 219 (HYFD…VNKG), 222 to 265 (TWLI…VAGG), 287 to 336 (ENYQ…PWNN), and 338 to 367 (LLIIGGETAGGKAVTDSVLISVKDNKVTVQ). The active-site Proton acceptor is glutamate 228.

It belongs to the NanM family. In terms of assembly, homodimer.

Its subcellular location is the periplasm. It carries out the reaction N-acetyl-alpha-neuraminate = N-acetyl-beta-neuraminate. Its function is as follows. Converts alpha-N-acetylneuranimic acid (Neu5Ac) to the beta-anomer, accelerating the equilibrium between the alpha- and beta-anomers. Probably facilitates sialidase-negative bacteria to compete successfully for limited amounts of extracellular Neu5Ac, which is likely taken up in the beta-anomer. In addition, the rapid removal of sialic acid from solution might be advantageous to the bacterium to damp down host responses. This chain is N-acetylneuraminate epimerase, found in Shigella sonnei (strain Ss046).